A 299-amino-acid polypeptide reads, in one-letter code: Trans-aconitate 3-methyltransferase (299 aa).

Serine 2 is subject to N-acetylserine.

It belongs to the methyltransferase superfamily. Tam family.

Its subcellular location is the cytoplasm. The catalysed reaction is trans-aconitate + S-adenosyl-L-methionine = (E)-2-(methoxycarbonylmethyl)but-2-enedioate + S-adenosyl-L-homocysteine. Functionally, catalyzes the S-adenosylmethionine monomethyl esterification of trans-aconitate and 3-isopropylmalate at high affinity and of other molecules like cis-aconitate, isocitrate, and citrate at lower velocities and affinities. The function of trans-aconitate methylation appears to be in reducing the toxicity of this spontaneous breakdown product of cis-aconitate. The role of 3-isopropylmalate methylation is unclear but may represent a metabolic branch at 3-isopropylmalate, where some of the material is taken in the pathway leading to leucine and some is taken in a pathway to the 3-isopropylmalate methyl ester, a molecule that provides a signal to switch from vegetative to invasive growth in response to amino acid starvation. This is Trans-aconitate 3-methyltransferase (TMT1) from Saccharomyces cerevisiae (strain ATCC 204508 / S288c) (Baker's yeast).